A 133-amino-acid chain; its full sequence is Holo-[acyl-carrier-protein] synthase (133 aa).

Asp-8 and Glu-56 together coordinate Mg(2+).

It belongs to the P-Pant transferase superfamily. AcpS family. It depends on Mg(2+) as a cofactor.

It is found in the cytoplasm. It carries out the reaction apo-[ACP] + CoA = holo-[ACP] + adenosine 3',5'-bisphosphate + H(+). Functionally, transfers the 4'-phosphopantetheine moiety from coenzyme A to a Ser of acyl-carrier-protein. In Clostridium perfringens (strain 13 / Type A), this protein is Holo-[acyl-carrier-protein] synthase.